A 596-amino-acid polypeptide reads, in one-letter code: Ulvan-active sulfatase (596 aa).

Positions 1 to 27 are cleaved as a signal peptide; sequence MLFLRFKFFNNRLLFVSVLCFVICVSC. Ca(2+) contacts are provided by E58, D59, C97, D306, and H307. C97 serves as the catalytic Nucleophile. C97 is modified (3-oxoalanine (Cys)).

This sequence belongs to the sulfatase family. The cofactor is Ca(2+). In terms of processing, the conversion to 3-oxoalanine (also known as C-formylglycine, FGly), of a serine or cysteine residue in prokaryotes and of a cysteine residue in eukaryotes, is critical for catalytic activity.

Its subcellular location is the periplasm. Functionally, sulfatase involved in ulvan degradation. Ulvan is the main polysaccharide component of the Ulvales (green seaweed) cell wall. It is composed of disaccharide building blocks comprising 3-sulfated rhamnose (Rha3S) linked to D-glucuronic acid (GlcA), L-iduronic acid (IduA), or D-xylose (Xyl). The sulfatase desulfates Xyl2S-Rha3S, product of the degradation of ulvan by endo-acting alpha-1,4-L-rhamnosidase, to Xyl-Rha3S. This Formosa agariphila (strain DSM 15362 / KCTC 12365 / LMG 23005 / KMM 3901 / M-2Alg 35-1) protein is Ulvan-active sulfatase.